The primary structure comprises 164 residues: Transmembrane protein B169L (164 aa).

2 consecutive transmembrane segments (helical) span residues 28–48 (NPFI…FAIC) and 60–80 (TAIY…YVLN). N-linked (GlcNAc...) asparagine; by host glycosylation is present at N88. A disordered region spans residues 114-142 (SPPSVPDELEEDRPKMIPAGSKPADFKPA).

This sequence belongs to the asfivirus B169L family.

The protein resides in the host membrane. It is found in the virion. In Ornithodoros (relapsing fever ticks), this protein is Transmembrane protein B169L.